We begin with the raw amino-acid sequence, 753 residues long: Cytoplasmic polyadenylation element-binding protein 3 (753 aa).

The interval 111 to 286 (VGESTPSSAG…NGSWHGELPP (176 aa)) is disordered. Composition is skewed to basic and acidic residues over residues 131–142 (KPTEKISVDEPP) and 175–188 (FGKE…EVVK). Residues 227–239 (SPAKISSNSSSSS) show a composition bias toward low complexity. Residues 265-279 (SRQGLSNRDNLSNGS) show a composition bias toward polar residues. In terms of domain architecture, RRM spans 298-320 (IFVGGVPWDITEAALKDSFGEFG). Residues 567 to 589 (KAYAGPHRRPHLTSNSLSKSHGC) are disordered. The span at 578 to 589 (LTSNSLSKSHGC) shows a compositional bias: polar residues.

In terms of biological role, cytoplasmic polyadenylation element binding protein that binds to and regulates the translation of specific mRNAs. The polypeptide is Cytoplasmic polyadenylation element-binding protein 3 (cpb-3) (Caenorhabditis briggsae).